Consider the following 299-residue polypeptide: ATP phosphoribosyltransferase (299 aa).

This sequence belongs to the ATP phosphoribosyltransferase family. Long subfamily. Mg(2+) serves as cofactor.

The protein resides in the cytoplasm. It catalyses the reaction 1-(5-phospho-beta-D-ribosyl)-ATP + diphosphate = 5-phospho-alpha-D-ribose 1-diphosphate + ATP. The protein operates within amino-acid biosynthesis; L-histidine biosynthesis; L-histidine from 5-phospho-alpha-D-ribose 1-diphosphate: step 1/9. With respect to regulation, feedback inhibited by histidine. Its function is as follows. Catalyzes the condensation of ATP and 5-phosphoribose 1-diphosphate to form N'-(5'-phosphoribosyl)-ATP (PR-ATP). Has a crucial role in the pathway because the rate of histidine biosynthesis seems to be controlled primarily by regulation of HisG enzymatic activity. This is ATP phosphoribosyltransferase from Baumannia cicadellinicola subsp. Homalodisca coagulata.